A 130-amino-acid polypeptide reads, in one-letter code: Ribosome-binding factor A (130 aa).

Belongs to the RbfA family. As to quaternary structure, monomer. Binds 30S ribosomal subunits, but not 50S ribosomal subunits or 70S ribosomes.

The protein resides in the cytoplasm. In terms of biological role, one of several proteins that assist in the late maturation steps of the functional core of the 30S ribosomal subunit. Associates with free 30S ribosomal subunits (but not with 30S subunits that are part of 70S ribosomes or polysomes). Required for efficient processing of 16S rRNA. May interact with the 5'-terminal helix region of 16S rRNA. This Flavobacterium johnsoniae (strain ATCC 17061 / DSM 2064 / JCM 8514 / BCRC 14874 / CCUG 350202 / NBRC 14942 / NCIMB 11054 / UW101) (Cytophaga johnsonae) protein is Ribosome-binding factor A.